We begin with the raw amino-acid sequence, 180 residues long: ADP-ribosylation factor 4 (180 aa).

Residue Gly-2 is the site of N-myristoyl glycine attachment. GTP-binding positions include 24–31 (GLDAAGKT), 67–71 (DVGGQ), and 126–129 (NKQD). Residue Ser-147 is modified to Phosphoserine.

It belongs to the small GTPase superfamily. Arf family. As to quaternary structure, forms a complex containing RAB11A, ASAP1, RAB3IP, RAP11FIP3 and ARF4; the complex promotes preciliary trafficking; the complex binds to RHO in photoreceptor cells and promotes RHO ciliary transport.

The protein resides in the golgi apparatus. It localises to the membrane. In terms of biological role, GTP-binding protein that functions as an allosteric activator of the cholera toxin catalytic subunit, an ADP-ribosyltransferase. Involved in protein trafficking; may modulate vesicle budding and uncoating within the Golgi apparatus. Part of the ciliary targeting complex containing Rab11, ASAP1, Rabin8/RAB3IP, RAB11FIP3 and ARF4, which direct preciliary vesicle trafficking to mother centriole and ciliogenesis initiation. This chain is ADP-ribosylation factor 4 (ARF4), found in Bos taurus (Bovine).